A 173-amino-acid polypeptide reads, in one-letter code: MTTIVCVRKDGKVAIGGDGQATLGNCVEKGTVRKVRRLYKDKVITGFAGSTADAFILRDLFEKKLELHQGHLVKSAVELAKEWRTERALRKLEAMMIVANESEFLLVSGSGDVIEPEQDVLAIGSGGNFAKSAALALLRTENNLTAKQIVAEALKIAGDIDIYSNHNHVIEEV.

The active site involves threonine 2. The Na(+) site is built by glycine 158, aspartate 161, and serine 164.

The protein belongs to the peptidase T1B family. HslV subfamily. In terms of assembly, a double ring-shaped homohexamer of HslV is capped on each side by a ring-shaped HslU homohexamer. The assembly of the HslU/HslV complex is dependent on binding of ATP.

It is found in the cytoplasm. It catalyses the reaction ATP-dependent cleavage of peptide bonds with broad specificity.. Allosterically activated by HslU binding. Functionally, protease subunit of a proteasome-like degradation complex believed to be a general protein degrading machinery. This Haemophilus ducreyi (strain 35000HP / ATCC 700724) protein is ATP-dependent protease subunit HslV.